We begin with the raw amino-acid sequence, 121 residues long: Structural protein p14.5 (121 aa).

2 disordered regions span residues M1–L24 and T84–K121. An N-acetylalanine; by host modification is found at A2. Positions K104–K121 are enriched in basic residues.

Belongs to the asfivirus structural protein p14.5 family. Interacts with the major capsid protein. Interacts with host IRF3; this interaction interferes with the recruitment of IRF3 to TBK1. In terms of processing, acetylated.

Its subcellular location is the virion. Structural protein required for transport of intracellular particles from the assembly sites to the plasma membrane. Binds to both ssDNA and dsDNA. Suppressed the activation of the cGAS/STING pathway by interfering with the recruitment of IRF3 to TBK1, which in turn suppresses IRF3 phosphorylation, decreasing interferon production. This Ornithodoros (relapsing fever ticks) protein is Structural protein p14.5.